The sequence spans 300 residues: Tyrosine recombinase XerC (300 aa).

The Core-binding (CB) domain maps to 2 to 88 (TQEGKLEQQF…SLRSFYTFLL (87 aa)). The Tyr recombinase domain maps to 109–294 (RLPKFFYSEE…TKEHLKSTYM (186 aa)). Catalysis depends on residues arginine 150, lysine 174, histidine 246, arginine 249, and histidine 272. Tyrosine 281 functions as the O-(3'-phospho-DNA)-tyrosine intermediate in the catalytic mechanism.

This sequence belongs to the 'phage' integrase family. XerC subfamily. Forms a cyclic heterotetrameric complex composed of two molecules of XerC and two molecules of XerD.

It localises to the cytoplasm. Its function is as follows. Site-specific tyrosine recombinase, which acts by catalyzing the cutting and rejoining of the recombining DNA molecules. The XerC-XerD complex is essential to convert dimers of the bacterial chromosome into monomers to permit their segregation at cell division. It also contributes to the segregational stability of plasmids. The polypeptide is Tyrosine recombinase XerC (Listeria monocytogenes serotype 4a (strain HCC23)).